A 416-amino-acid polypeptide reads, in one-letter code: Ribulose bisphosphate carboxylase large chain (416 aa).

2 residues coordinate substrate: asparagine 100 and threonine 150. The Proton acceptor role is filled by lysine 152. Lysine 154 serves as a coordination point for substrate. 3 residues coordinate Mg(2+): lysine 178, aspartate 180, and glutamate 181. Lysine 178 is modified (N6-carboxylysine). Histidine 271 functions as the Proton acceptor in the catalytic mechanism. Residues arginine 272, histidine 304, and serine 356 each contribute to the substrate site.

This sequence belongs to the RuBisCO large chain family. Type I subfamily. In terms of assembly, heterohexadecamer of 8 large chains and 8 small chains; disulfide-linked. The disulfide link is formed within the large subunit homodimers. It depends on Mg(2+) as a cofactor. The disulfide bond which can form in the large chain dimeric partners within the hexadecamer appears to be associated with oxidative stress and protein turnover.

Its subcellular location is the plastid. It localises to the chloroplast. The enzyme catalyses 2 (2R)-3-phosphoglycerate + 2 H(+) = D-ribulose 1,5-bisphosphate + CO2 + H2O. It catalyses the reaction D-ribulose 1,5-bisphosphate + O2 = 2-phosphoglycolate + (2R)-3-phosphoglycerate + 2 H(+). RuBisCO catalyzes two reactions: the carboxylation of D-ribulose 1,5-bisphosphate, the primary event in carbon dioxide fixation, as well as the oxidative fragmentation of the pentose substrate in the photorespiration process. Both reactions occur simultaneously and in competition at the same active site. The polypeptide is Ribulose bisphosphate carboxylase large chain (rbcL) (Cheiropleuria bicuspis (Fern)).